A 323-amino-acid chain; its full sequence is tRNA U34 carboxymethyltransferase (323 aa).

Residues Lys93, Trp107, Lys112, Gly132, 154-156 (DPS), 182-183 (VE), Met197, Tyr201, and Arg316 each bind carboxy-S-adenosyl-L-methionine.

Belongs to the class I-like SAM-binding methyltransferase superfamily. CmoB family. In terms of assembly, homotetramer.

It carries out the reaction carboxy-S-adenosyl-L-methionine + 5-hydroxyuridine(34) in tRNA = 5-carboxymethoxyuridine(34) in tRNA + S-adenosyl-L-homocysteine + H(+). Its function is as follows. Catalyzes carboxymethyl transfer from carboxy-S-adenosyl-L-methionine (Cx-SAM) to 5-hydroxyuridine (ho5U) to form 5-carboxymethoxyuridine (cmo5U) at position 34 in tRNAs. The sequence is that of tRNA U34 carboxymethyltransferase from Pseudoalteromonas atlantica (strain T6c / ATCC BAA-1087).